A 399-amino-acid polypeptide reads, in one-letter code: Stearoyl-[acyl-carrier-protein] 9-desaturase, chloroplastic (399 aa).

The span at 1–12 (MALNLNPVSTPF) shows a compositional bias: polar residues. Residues 1–35 (MALNLNPVSTPFQCRRLPSFSPRQTPSRRSPKFFM) constitute a chloroplast transit peptide. The disordered stretch occupies residues 1–57 (MALNLNPVSTPFQCRRLPSFSPRQTPSRRSPKFFMASTLSSSSPKEAESLKKPFSPP). Fe cation contacts are provided by glutamate 141, glutamate 179, histidine 182, glutamate 232, glutamate 265, and histidine 268.

The protein belongs to the fatty acid desaturase type 2 family. As to quaternary structure, homodimer. Fe(2+) serves as cofactor.

The protein resides in the plastid. Its subcellular location is the chloroplast. It catalyses the reaction octadecanoyl-[ACP] + 2 reduced [2Fe-2S]-[ferredoxin] + O2 + 2 H(+) = (9Z)-octadecenoyl-[ACP] + 2 oxidized [2Fe-2S]-[ferredoxin] + 2 H2O. It participates in lipid metabolism; fatty acid metabolism. Converts stearoyl-ACP to oleoyl-ACP by introduction of a cis double bond between carbons 9 and 10 of the acyl chain. The sequence is that of Stearoyl-[acyl-carrier-protein] 9-desaturase, chloroplastic from Spinacia oleracea (Spinach).